The following is a 644-amino-acid chain: Zinc transporter ZIP4 (644 aa).

Residues 1 to 27 (MAILAWLEPRPLLAVLVLVLTMRMAQP) form the signal peptide. The Extracellular segment spans residues 28–323 (AHLLTLLSSG…QNQLSQAEKY (296 aa)). Cystine bridges form between Cys59/Cys64, Cys67/Cys103, and Cys153/Cys188. The tract at residues 231–259 (TETHSDHHHQEKRVNRQGPTPLTAPNSSS) is disordered. The segment covering 233-244 (THSDHHHQEKRV) has biased composition (basic and acidic residues). The span at 247-259 (QGPTPLTAPNSSS) shows a compositional bias: polar residues. A disulfide bridge links Cys266 with Cys305. The chain crosses the membrane as a helical span at residues 324–344 (LYGSLATLLICLCSTFGLLLL). At 345 to 355 (TCAACSTAAHY) the chain is on the cytoplasmic side. A helical membrane pass occupies residues 356–376 (VIQTFLGMAVGALTGDALLHL). Over 377 to 404 (TPKVLGLHQHGGDSEHRADSHGPQTTWR) the chain is Extracellular. Residues 405–425 (LVVALSGLYVFFLFEKLCDLL) traverse the membrane as a helical segment. The Cytoplasmic portion of the chain corresponds to 426–495 (LPQDPEDRKG…KSPELRLLPY (70 aa)). An Essential for SLC39A4 endocytosis motif is present at residues 449–451 (LQL). Positions 456–467 (LRPPKQPHEGSR) are enriched in basic and acidic residues. Residues 456–484 (LRPPKQPHEGSRADLVAEESPELLSPEPR) form a disordered region. A helical transmembrane segment spans residues 496 to 515 (MITLGDGLHNFADGLAVGAA). His504, Asn505, and Asp508 together coordinate Zn(2+). Over 516–523 (FASSWKTG) the chain is Extracellular. A helical membrane pass occupies residues 524 to 550 (LATSLAVFCHEVPHELGDFAALLHAGL). His533, Glu534, and His537 together coordinate Zn(2+). Topologically, residues 551 to 555 (PVSRA) are cytoplasmic. The chain crosses the membrane as a helical span at residues 556 to 576 (LLLNLASGLTAFAGLYVALAL). Over 577–583 (GVGEESE) the chain is Extracellular. The chain crosses the membrane as a helical span at residues 584–604 (SWTLAVAIGLFLYVALCDMLP). Topologically, residues 605-614 (AMLNVRDPRP) are cytoplasmic. Residues 615–635 (WLLFLLHNVGLLGGWAVLLLL) traverse the membrane as a helical segment. Topologically, residues 636-644 (SLYEDSIAL) are extracellular.

It belongs to the ZIP transporter (TC 2.A.5) family. As to quaternary structure, homodimer. Post-translationally, the extracellular N-terminal ectodomain is cleaved when cells are Zn(2+) deficient, N-terminally cleaved SLC39A4 is internalized at a faster rate. Under excess Zn(2+) conditions, SLC39A4 on the cell surface is rapidly endocytosed, ubiquitinated and degraded. In terms of processing, glycosylated.

The protein localises to the cell membrane. Its subcellular location is the recycling endosome membrane. The protein resides in the apical cell membrane. It catalyses the reaction Zn(2+)(in) = Zn(2+)(out). In terms of biological role, selective transporter that mediates the uptake of Zn(2+). Plays an essential role for dietary zinc uptake from small intestine. The Zn(2+) uniporter activity is regulated by zinc availability. Also exhibits polyspecific binding and transport of Cu(2+), Cd(2+) and possibly Ni(2+) but at higher concentrations. The protein is Zinc transporter ZIP4 of Pteropus alecto (Black flying fox).